The sequence spans 366 residues: Ribosomal RNA large subunit methyltransferase M (366 aa).

S-adenosyl-L-methionine is bound by residues serine 188, 221–224 (CPGG), aspartate 240, aspartate 260, and aspartate 277. The active-site Proton acceptor is lysine 306.

Belongs to the class I-like SAM-binding methyltransferase superfamily. RNA methyltransferase RlmE family. RlmM subfamily. In terms of assembly, monomer.

Its subcellular location is the cytoplasm. The catalysed reaction is cytidine(2498) in 23S rRNA + S-adenosyl-L-methionine = 2'-O-methylcytidine(2498) in 23S rRNA + S-adenosyl-L-homocysteine + H(+). In terms of biological role, catalyzes the 2'-O-methylation at nucleotide C2498 in 23S rRNA. This Citrobacter koseri (strain ATCC BAA-895 / CDC 4225-83 / SGSC4696) protein is Ribosomal RNA large subunit methyltransferase M.